The chain runs to 401 residues: Argininosuccinate synthase (401 aa).

Residues 9–17 (AFSGGLDTS) and A35 each bind ATP. L-citrulline contacts are provided by Y88 and S93. An ATP-binding site is contributed by G117. T119, N123, and D124 together coordinate L-aspartate. L-citrulline is bound at residue N123. L-citrulline contacts are provided by R127 and Y273.

It belongs to the argininosuccinate synthase family. Type 1 subfamily. As to quaternary structure, homotetramer.

It is found in the cytoplasm. It carries out the reaction L-citrulline + L-aspartate + ATP = 2-(N(omega)-L-arginino)succinate + AMP + diphosphate + H(+). Its pathway is amino-acid biosynthesis; L-arginine biosynthesis; L-arginine from L-ornithine and carbamoyl phosphate: step 2/3. The sequence is that of Argininosuccinate synthase from Xylella fastidiosa (strain Temecula1 / ATCC 700964).